We begin with the raw amino-acid sequence, 4363 residues long: AM-toxin synthetase AMT1 (4363 aa).

Residues 278–670 form an adenylation 1 region; sequence AGQAKQRPHA…GSLLYVGRKD (393 aa). Residues 810 to 887 enclose the Carrier 1 domain; it reads APDSVIARQL…ALAAIAKVIP (78 aa). Ser-847 is subject to O-(pantetheine 4'-phosphoryl)serine. The segment at 926-1340 is condensation 1; it reads EDVYACTPLQ…TLGQIDVLTS (415 aa). An adenylation 2 region spans residues 1368 to 1765; the sequence is KQARTRPGAI…LGRKDTQIKI (398 aa). The Carrier 2 domain maps to 1884–1961; that stretch reads PPVTDMEKHV…DQARHVTLLT (78 aa). The residue at position 1922 (Ser-1922) is an O-(pantetheine 4'-phosphoryl)serine. Residues 1999–2410 form a condensation 2 region; it reads EDVYPCTPLQ…ASPSSSTLVS (412 aa). An adenylation 3 region spans residues 2448–2853; the sequence is RKKALAAPQA…GRKDNQVKIR (406 aa). Positions 2977–3053 constitute a Carrier 3 domain; that stretch reads LPSTVMEETL…DLAACCTDRR (77 aa). At Ser-3014 the chain carries O-(pantetheine 4'-phosphoryl)serine. A condensation 3 region spans residues 3098–3503; the sequence is VEDVYPCTPM…ELVSSIETLN (406 aa). The Carrier 4 domain occupies 3730–3806; it reads PAVTAMQLAI…SLAVRATENT (77 aa). Residue Ser-3767 is modified to O-(pantetheine 4'-phosphoryl)serine. Residues 3850–4204 form a condensation 4 region; it reads QDVLPCTSMQ…GLDEIVEHYA (355 aa).

This sequence belongs to the NRP synthetase family.

It participates in mycotoxin biosynthesis. Functionally, nonribosomal peptide synthetase; part of the gene clusters that mediate the biosynthesis of AM-toxins, host-selective toxins (HSTs) causing Alternaria blotch on apple, a worldwide distributed disease. AM-toxins are cyclic depsipeptides containing the 3 residues 2-hydroxy-isovaleric acid (2-HIV), dehydroalanine, L-alanine which are common for all 3 AM-toxins I to III. The fourth precursor is L-alpha-amino-methoxyphenyl-valeric acid (L-Amv) for AM-toxin I, L-alpha-amino-phenyl-valeric acid (L-Apv) for AM-toxin II, and L-alpha-amino-hydroxyphenyl-valeric acid (L-Ahv) for AM-toxin III. AM-toxins have two target sites for affecting susceptible apple cells; they cause invagination of the plasma membrane and electrolyte loss, and chloroplast disorganization. The non-ribosomal peptide synthetase AMT1 contains 4 catalytic modules and is responsible for activation of each residue in AM-toxin. The aldo-keto reductase AMT2 catalyzes the conversion of 2-keto-isovaleric acid (2-KIV) to 2-hydroxy-isovaleric acid (2-HIV), one of the precursor residues incorporated by AMT1 during AM-toxin biosynthesis, by reduction of its ketone to an alcohol. The cytochrome P450 monooxygenase AMT3 and the thioesterase AMT4 are also important for AM-toxin production, but their exact function within the AM-toxin biosynthesis are not known yet. Up to 21 proteins (including AMT1 to AMT4) are predicted to be involved in AM-toxin biosynthesis since their expression ishighly up-regulated in AM-toxin-producing cultures. In Alternaria alternata (Alternaria rot fungus), this protein is AM-toxin synthetase AMT1.